The chain runs to 1084 residues: Teashirt homolog 1 (1084 aa).

Disordered regions lie at residues 49-108, 140-167, and 269-298; these read EETE…SVSY, NSATSNNDASQKESSTPTPTPPTSTAST, and GHYRDDNRDKDSEKTKRWSKPRKRSLMEME. 2 stretches are compositionally biased toward polar residues: residues 57-71 and 140-152; these read QSYQNSPVSTATNQD and NSATSNNDASQKE. C2H2-type zinc fingers lie at residues 246–270 and 307–331; these read FRCKDCSAAYDTLVELTVHMNETGH and LKCMYCGHSFESLQDLSVHMIKTKH. The span at 269-284 shows a compositional bias: basic and acidic residues; it reads GHYRDDNRDKDSEKTK. A C2H2-type 3; atypical zinc finger spans residues 416–440; sequence LKCMECGSSHDTLQQLTAHMMVTGH. 2 disordered regions span residues 467–534 and 653–728; these read SIPL…EKFE and TGKV…LKAK. Basic and acidic residues-rich tracts occupy residues 496–534, 653–671, and 681–714; these read SEEKKEPEKEKEKEKAPPAAGDAERKIKEETEDATEKFE, TGKVSIKKEERPTEKEKSS, and KENKDLPKTEETGSKPQKKGSDSETGKAKKESTL. The residue at position 771 (Ser771) is a Phosphoserine. Residues 855-879 are disordered; it reads GRLTPKSSTPSTVSEKSDADGSSFE. The span at 859-868 shows a compositional bias: polar residues; it reads PKSSTPSTVS. A DNA-binding region (homeobox; atypical) is located at residues 891–961; sequence RKGRQSNWNP…NVKYQLRRTG (71 aa). C2H2-type zinc fingers lie at residues 976 to 998 and 1044 to 1067; these read FFCNDCASQFRTASTYVSHLETH and FQCKLCNRTFASKHAVKLHLSKTH.

This sequence belongs to the teashirt C2H2-type zinc-finger protein family. As to quaternary structure, interacts (via homeobox domain) with APBB1 (via PID domain 1).

It is found in the nucleus. Functionally, probable transcriptional regulator involved in developmental processes. May act as a transcriptional repressor (Potential). The polypeptide is Teashirt homolog 1 (Tshz1) (Mus musculus (Mouse)).